A 489-amino-acid chain; its full sequence is MKIKTIKRSADDYVPVKSTQESQMPRNLNPELHPFERAREYTKALNATKLERMFAKPFVGQLGYGHRDGVYAIAKNYGSLNKLATGSADGVIKYWNMSTREEFVSFKAHYGLVTGLCVTQPRFHDKKPDLKSQNFMLSCSDDKTVKLWSINVDDYSNKNSSDNDSVTNEEGLIRTFDGESAFQGIDSHRENSTFATGGAKIHLWDVNRLKPVSDLSWGADNITSLKFNQNETDILASTGSDNSIVLYDLRTNSPTQKIVQTMRTNAICWNPMEAFNFVTANEDHNAYYYDMRNLSRSLNVFKDHVSAVMDVDFSPTGDEIVTGSYDKSIRIYKTNHGHSREIYHTKRMQHVFQVKYSMDSKYIISGSDDGNVRLWRSKAWERSNVKTTREKNKLEYDEKLKERFRHMPEIKRISRHRHVPQVIKKAQEIKNIELSSIKRREANERRTRKDMPYISERKKQIVGTVHKYEDSGRDRKRRKEDDKRDTQEK.

WD repeat units lie at residues 65-105 (GHRD…EFVS), 113-158 (VTGL…YSNK), 177-214 (DGES…PVSD), 217-257 (WGAD…PTQK), 259-299 (VQTM…RSLN), 303-342 (DHVS…SREI), and 346-385 (KRMQ…RSNV). Composition is skewed to basic and acidic residues over residues 440–459 (REAN…ERKK) and 466–489 (HKYE…TQEK). The tract at residues 440-489 (REANERRTRKDMPYISERKKQIVGTVHKYEDSGRDRKRRKEDDKRDTQEK) is disordered.

This sequence belongs to the WD repeat DCAF13/WDSOF1 family. In terms of assembly, interacts with snoRNA U3. Interacts with NOP1 and MPP10. Component of the ribosomal small subunit (SSU) processome composed of at least 40 protein subunits and snoRNA U3.

It is found in the nucleus. The protein resides in the nucleolus. Its function is as follows. Required for ribosomal RNA processing. This chain is Protein SOF1 (SOF1), found in Saccharomyces cerevisiae (strain ATCC 204508 / S288c) (Baker's yeast).